The chain runs to 142 residues: Large ribosomal subunit protein bL17 (142 aa).

Belongs to the bacterial ribosomal protein bL17 family. In terms of assembly, part of the 50S ribosomal subunit. Contacts protein L32.

In Rickettsia bellii (strain OSU 85-389), this protein is Large ribosomal subunit protein bL17.